Reading from the N-terminus, the 327-residue chain is Quinone oxidoreductase (327 aa).

This sequence belongs to the zinc-containing alcohol dehydrogenase family. Quinone oxidoreductase subfamily. Homodimer.

It catalyses the reaction 2 a quinone + NADPH + H(+) = 2 a 1,4-benzosemiquinone + NADP(+). In Salmonella typhimurium (strain LT2 / SGSC1412 / ATCC 700720), this protein is Quinone oxidoreductase (qor).